The chain runs to 364 residues: Cobalt-precorrin-5B C(1)-methyltransferase (364 aa).

Belongs to the CbiD family.

The enzyme catalyses Co-precorrin-5B + S-adenosyl-L-methionine = Co-precorrin-6A + S-adenosyl-L-homocysteine. It participates in cofactor biosynthesis; adenosylcobalamin biosynthesis; cob(II)yrinate a,c-diamide from sirohydrochlorin (anaerobic route): step 6/10. Catalyzes the methylation of C-1 in cobalt-precorrin-5B to form cobalt-precorrin-6A. The protein is Cobalt-precorrin-5B C(1)-methyltransferase of Pseudomonas putida (strain W619).